Consider the following 106-residue polypeptide: Insulin-like peptide 04 (106 aa).

A signal peptide spans Met1–Ala22. Positions Leu23–Ser37 are excised as a propeptide. Cystine bridges form between Cys45/Cys50, Cys46/Cys80, and Cys59/Cys68. Positions Arg86–Arg106 are cleaved as a propeptide — c peptide.

It belongs to the insulin family.

Its subcellular location is the secreted. Insulin decreases blood glucose concentration. May have evolved to activate insulin receptors (INSR) in vertebrates. Molecular docking studies reveals unique interaction with the human insulin receptor. In vivo, insulin-like peptide injection reduces blood glucose levels in two models of zebrafish diabetes (streptozotocin- and glucose-induced). Also shorter swimming distance of zebrafish larvae, an effect which is not observed with human insulin. This is Insulin-like peptide 04 from Exaiptasia diaphana (Tropical sea anemone).